We begin with the raw amino-acid sequence, 467 residues long: Probable glutamate decarboxylase gamma (467 aa).

An N6-(pyridoxal phosphate)lysine modification is found at K278.

This sequence belongs to the group II decarboxylase family. The cofactor is pyridoxal 5'-phosphate.

It carries out the reaction L-glutamate + H(+) = 4-aminobutanoate + CO2. The protein is Probable glutamate decarboxylase gamma of Listeria monocytogenes serovar 1/2a (strain ATCC BAA-679 / EGD-e).